The following is a 255-amino-acid chain: 4-hydroxy-tetrahydrodipicolinate reductase (255 aa).

Residues 9–14, 89–91, and 115–118 each bind NAD(+); these read GFKGKM, GTT, and APNF. The active-site Proton donor/acceptor is the His-145. His-146 serves as a coordination point for (S)-2,3,4,5-tetrahydrodipicolinate. Catalysis depends on Lys-149, which acts as the Proton donor. (S)-2,3,4,5-tetrahydrodipicolinate is bound at residue 155-156; the sequence is GT.

The protein belongs to the DapB family.

It localises to the cytoplasm. It carries out the reaction (S)-2,3,4,5-tetrahydrodipicolinate + NAD(+) + H2O = (2S,4S)-4-hydroxy-2,3,4,5-tetrahydrodipicolinate + NADH + H(+). The enzyme catalyses (S)-2,3,4,5-tetrahydrodipicolinate + NADP(+) + H2O = (2S,4S)-4-hydroxy-2,3,4,5-tetrahydrodipicolinate + NADPH + H(+). The protein operates within amino-acid biosynthesis; L-lysine biosynthesis via DAP pathway; (S)-tetrahydrodipicolinate from L-aspartate: step 4/4. In terms of biological role, catalyzes the conversion of 4-hydroxy-tetrahydrodipicolinate (HTPA) to tetrahydrodipicolinate. The protein is 4-hydroxy-tetrahydrodipicolinate reductase of Streptococcus gordonii (strain Challis / ATCC 35105 / BCRC 15272 / CH1 / DL1 / V288).